Consider the following 240-residue polypeptide: UDP-2,3-diacylglucosamine hydrolase (240 aa).

Mn(2+)-binding residues include Asp8, His10, Asp41, Asn79, and His114. 79 to 80 (NR) serves as a coordination point for substrate. Residues Asp122, Ser160, Asn164, Lys167, and His195 each coordinate substrate. The Mn(2+) site is built by His195 and His197.

This sequence belongs to the LpxH family. Mn(2+) is required as a cofactor.

The protein localises to the cell inner membrane. The enzyme catalyses UDP-2-N,3-O-bis[(3R)-3-hydroxytetradecanoyl]-alpha-D-glucosamine + H2O = 2-N,3-O-bis[(3R)-3-hydroxytetradecanoyl]-alpha-D-glucosaminyl 1-phosphate + UMP + 2 H(+). The protein operates within glycolipid biosynthesis; lipid IV(A) biosynthesis; lipid IV(A) from (3R)-3-hydroxytetradecanoyl-[acyl-carrier-protein] and UDP-N-acetyl-alpha-D-glucosamine: step 4/6. Its function is as follows. Hydrolyzes the pyrophosphate bond of UDP-2,3-diacylglucosamine to yield 2,3-diacylglucosamine 1-phosphate (lipid X) and UMP by catalyzing the attack of water at the alpha-P atom. Involved in the biosynthesis of lipid A, a phosphorylated glycolipid that anchors the lipopolysaccharide to the outer membrane of the cell. This Escherichia fergusonii (strain ATCC 35469 / DSM 13698 / CCUG 18766 / IAM 14443 / JCM 21226 / LMG 7866 / NBRC 102419 / NCTC 12128 / CDC 0568-73) protein is UDP-2,3-diacylglucosamine hydrolase.